A 447-amino-acid chain; its full sequence is Glutamyl-tRNA reductase (447 aa).

Residues 49–52, serine 109, 114–116, and glutamine 120 contribute to the substrate site; these read TCNR and EQQ. Cysteine 50 functions as the Nucleophile in the catalytic mechanism. 189-194 is an NADP(+) binding site; that stretch reads GAGSMG.

It belongs to the glutamyl-tRNA reductase family. In terms of assembly, homodimer.

The catalysed reaction is (S)-4-amino-5-oxopentanoate + tRNA(Glu) + NADP(+) = L-glutamyl-tRNA(Glu) + NADPH + H(+). It functions in the pathway porphyrin-containing compound metabolism; protoporphyrin-IX biosynthesis; 5-aminolevulinate from L-glutamyl-tRNA(Glu): step 1/2. Its function is as follows. Catalyzes the NADPH-dependent reduction of glutamyl-tRNA(Glu) to glutamate 1-semialdehyde (GSA). This chain is Glutamyl-tRNA reductase, found in Mycobacterium sp. (strain JLS).